A 175-amino-acid polypeptide reads, in one-letter code: MARVLKVAAASAAGLFPRLRTPVSTVRTSASLSSHPGAGPVWNLGRLNHVAVAVPDLEKARAFYKNVLGAEVGEPVPLPEHGVSVVFVNLGNTKMELLHPLGSDSPIAGFLKKNKAGGMHHVCIEVDNINVAVMDLKEKKIRILSEEAKIGAHGKPVIFLHPSDCGGVLVELEQA.

A mitochondrion-targeting transit peptide spans 1–35; that stretch reads MARVLKVAAASAAGLFPRLRTPVSTVRTSASLSSH. The VOC domain maps to 46 to 175; it reads RLNHVAVAVP…GGVLVELEQA (130 aa). Position 49 (His49) interacts with Co(2+). An N6-succinyllysine modification is found at Lys113. His121 provides a ligand contact to Co(2+). Lys149 is subject to N6-acetyllysine; alternate. An N6-succinyllysine; alternate modification is found at Lys149. Position 171 (Glu171) interacts with Co(2+).

This sequence belongs to the methylmalonyl-CoA epimerase family.

It is found in the mitochondrion. The catalysed reaction is (R)-methylmalonyl-CoA = (S)-methylmalonyl-CoA. Its function is as follows. Methylmalonyl-CoA epimerase involved in propionyl-CoA metabolism. The sequence is that of Methylmalonyl-CoA epimerase, mitochondrial (MCEE) from Bos taurus (Bovine).